The following is a 366-amino-acid chain: MAP kinase-activated protein kinase 2 (366 aa).

Residues 30-291 enclose the Protein kinase domain; sequence KVTSQVLGLG…ITEFMNHPWI (262 aa). Residues 36–44 and Lys59 contribute to the ATP site; that span reads LGLGINGKV. Residue 105–107 participates in staurosporine binding; sequence ECL. Asp152 (proton acceptor) is an active-site residue. Residue Thr188 is modified to Phosphothreonine; by MAPK14. Ser238 carries the post-translational modification Phosphoserine; by MAPK14. Ser294 bears the Phosphoserine; by autocatalysis mark. Residues 294 to 330 form an autoinhibitory helix region; that stretch reads STKVPQTPLHTSRVLKEDKERWEDVKEEMTSALATMR. Thr300 carries the post-translational modification Phosphothreonine; by MAPK14. Residue Lys319 forms a Glycyl lysine isopeptide (Lys-Gly) (interchain with G-Cter in SUMO) linkage. The short motif at 322-331 is the Nuclear export signal (NES) element; it reads MTSALATMRV. The segment at 332–356 is p38 MAPK-binding site; sequence DYEQIKIKKIEDASNPLLLKRRKKA. 2 short sequence motifs (bipartite nuclear localization signal) span residues 337–340 and 351–355; these read KIKK and KRRKK.

This sequence belongs to the protein kinase superfamily. CAMK Ser/Thr protein kinase family. As to quaternary structure, heterodimer with p38-alpha/MAPK14; this heterodimer forms a stable complex: molecules are positioned 'face to face' so that the ATP-binding sites of both kinases are at the heterodimer interface. Interacts with PHC2. Interacts with HSF1. In terms of processing, sumoylation inhibits the protein kinase activity. Phosphorylated and activated by MAP kinase p38-alpha/MAPK14 at Thr-188, Ser-238 and Thr-300.

Its subcellular location is the cytoplasm. The protein resides in the nucleus. The enzyme catalyses L-seryl-[protein] + ATP = O-phospho-L-seryl-[protein] + ADP + H(+). It carries out the reaction L-threonyl-[protein] + ATP = O-phospho-L-threonyl-[protein] + ADP + H(+). With respect to regulation, activated following phosphorylation by p38-alpha/MAPK14 following various stresses. Inhibited following sumoylation. Specifically inhibited by pyrrolopyridine inhibitors. In terms of biological role, stress-activated serine/threonine-protein kinase involved in cytokine production, endocytosis, reorganization of the cytoskeleton, cell migration, cell cycle control, chromatin remodeling, DNA damage response and transcriptional regulation. Following stress, it is phosphorylated and activated by MAP kinase p38-alpha/MAPK14, leading to phosphorylation of substrates. Phosphorylates serine in the peptide sequence, Hyd-X-R-X(2)-S, where Hyd is a large hydrophobic residue. Phosphorylates ALOX5, CDC25B, CDC25C, CEP131, ELAVL1, HNRNPA0, HSP27/HSPB1, KRT18, KRT20, LIMK1, LSP1, PABPC1, PARN, PDE4A, RCSD1, RPS6KA3, TAB3 and TTP/ZFP36. Phosphorylates HSF1; leading to the interaction with HSP90 proteins and inhibiting HSF1 homotrimerization, DNA-binding and transactivation activities. Mediates phosphorylation of HSP27/HSPB1 in response to stress, leading to dissociation of HSP27/HSPB1 from large small heat-shock protein (sHsps) oligomers and impairment of their chaperone activities and ability to protect against oxidative stress effectively. Involved in inflammatory response by regulating tumor necrosis factor (TNF) and IL6 production post-transcriptionally: acts by phosphorylating AU-rich elements (AREs)-binding proteins ELAVL1, HNRNPA0, PABPC1 and TTP/ZFP36, leading to regulate the stability and translation of TNF and IL6 mRNAs. Phosphorylation of TTP/ZFP36, a major post-transcriptional regulator of TNF, promotes its binding to 14-3-3 proteins and reduces its ARE mRNA affinity leading to inhibition of dependent degradation of ARE-containing transcripts. Phosphorylates CEP131 in response to cellular stress following ultraviolet irradiation which promotes binding of CEP131 to 14-3-3 proteins and inhibits formation of novel centriolar satellites. Also involved in late G2/M checkpoint following DNA damage through a process of post-transcriptional mRNA stabilization: following DNA damage, relocalizes from nucleus to cytoplasm and phosphorylates HNRNPA0 and PARN, leading to stabilization of GADD45A mRNA. Involved in toll-like receptor signaling pathway (TLR) in dendritic cells: required for acute TLR-induced macropinocytosis by phosphorylating and activating RPS6KA3. The polypeptide is MAP kinase-activated protein kinase 2 (MAPKAPK2) (Oryctolagus cuniculus (Rabbit)).